Consider the following 680-residue polypeptide: DNA ligase (680 aa).

NAD(+) contacts are provided by residues 35–39, 86–87, and glutamate 111; these read DADFD and SL. Lysine 113 acts as the N6-AMP-lysine intermediate in catalysis. NAD(+) is bound by residues arginine 134, glutamate 174, lysine 290, and lysine 314. Residues cysteine 408, cysteine 411, cysteine 427, and cysteine 433 each contribute to the Zn(2+) site. The 84-residue stretch at 597–680 folds into the BRCT domain; sequence VAEQTLEGLT…RLLNTGSADE (84 aa).

It belongs to the NAD-dependent DNA ligase family. LigA subfamily. Mg(2+) serves as cofactor. The cofactor is Mn(2+).

The catalysed reaction is NAD(+) + (deoxyribonucleotide)n-3'-hydroxyl + 5'-phospho-(deoxyribonucleotide)m = (deoxyribonucleotide)n+m + AMP + beta-nicotinamide D-nucleotide.. Its function is as follows. DNA ligase that catalyzes the formation of phosphodiester linkages between 5'-phosphoryl and 3'-hydroxyl groups in double-stranded DNA using NAD as a coenzyme and as the energy source for the reaction. It is essential for DNA replication and repair of damaged DNA. The sequence is that of DNA ligase from Corynebacterium glutamicum (strain ATCC 13032 / DSM 20300 / JCM 1318 / BCRC 11384 / CCUG 27702 / LMG 3730 / NBRC 12168 / NCIMB 10025 / NRRL B-2784 / 534).